The primary structure comprises 430 residues: 3-phosphoshikimate 1-carboxyvinyltransferase (430 aa).

3-phosphoshikimate is bound by residues K20, S21, and R25. K20 lines the phosphoenolpyruvate pocket. Phosphoenolpyruvate-binding residues include G90 and R118. Residues S163, S164, Q165, S191, D311, and K338 each contribute to the 3-phosphoshikimate site. A phosphoenolpyruvate-binding site is contributed by Q165. Residue D311 is the Proton acceptor of the active site. Residues R342 and R383 each coordinate phosphoenolpyruvate.

The protein belongs to the EPSP synthase family. As to quaternary structure, monomer.

It is found in the cytoplasm. It catalyses the reaction 3-phosphoshikimate + phosphoenolpyruvate = 5-O-(1-carboxyvinyl)-3-phosphoshikimate + phosphate. Its pathway is metabolic intermediate biosynthesis; chorismate biosynthesis. Catalyzes the transfer of the enolpyruvyl moiety of phosphoenolpyruvate (PEP) to the 5-hydroxyl of shikimate-3-phosphate (S3P) to produce enolpyruvyl shikimate-3-phosphate and inorganic phosphate. The sequence is that of 3-phosphoshikimate 1-carboxyvinyltransferase from Methanosarcina mazei (strain ATCC BAA-159 / DSM 3647 / Goe1 / Go1 / JCM 11833 / OCM 88) (Methanosarcina frisia).